Reading from the N-terminus, the 457-residue chain is Heme sensor protein HssS (457 aa).

2 consecutive transmembrane segments (helical) span residues 9–29 (IAIY…VLTN) and 164–184 (TFLA…VIAS). The HAMP domain occupies 186-238 (YSIIRPVKKLKLATERLIDGDFETPIKQTRKDEIGTLQYHFNKMRESLGQVDQ). The Histidine kinase domain maps to 246-456 (NVSHEIKTPL…TFTITLPNNS (211 aa)). Histidine 249 carries the post-translational modification Phosphohistidine; by autocatalysis.

In terms of processing, autophosphorylated.

The protein resides in the cell membrane. It carries out the reaction ATP + protein L-histidine = ADP + protein N-phospho-L-histidine.. Functionally, member of the two-component regulatory system HssS/HssR involved in intracellular heme homeostasis and tempering of staphylococcal virulence. HssS functions as a heme sensor histidine kinase which is autophosphorylated at a histidine residue and transfers its phosphate group to an aspartate residue of HssR. HssR/HssS activates the expression of hrtAB, an efflux pump, in response to extracellular heme, hemin, hemoglobin or blood. The chain is Heme sensor protein HssS (hssS) from Staphylococcus aureus (strain USA300).